The chain runs to 293 residues: Probable flavonol synthase 6 (293 aa).

The Fe2OG dioxygenase domain maps to 156-253 (KAQYVMRINY…RMSWPILVEP (98 aa)). 164 to 166 (NYY) is a 2-oxoglutarate binding site. Fe cation-binding residues include histidine 178, aspartate 180, and histidine 234. 244 to 246 (RMS) serves as a coordination point for 2-oxoglutarate.

The protein belongs to the iron/ascorbate-dependent oxidoreductase family. Fe(2+) is required as a cofactor.

It carries out the reaction a (2R,3R)-dihydroflavonol + 2-oxoglutarate + O2 = a flavonol + succinate + CO2 + H2O. Its pathway is secondary metabolite biosynthesis; flavonoid biosynthesis. The protein is Probable flavonol synthase 6 (FLS6) of Arabidopsis thaliana (Mouse-ear cress).